The following is a 468-amino-acid chain: MFSITTLRDWTPDPGSIICWHASPTAKAKARQAPISEVPPSYQQAQHLRRYRDHVARGLDMSRLMIFTWDLPGRCNIRAMNYAINAHLRRHDTYHSWFEFDNAEHIVRHTIADPADIEVVQAEHQNMTSAELRHHIATPQPLQWDCFLFGIIQSDDHFTFYASIAHLCVDPMIVGVLFIEIHMMYSALVGGDPPIELPPAGRYDDHCVRQYADTAALTLDSARVRRWVEFAANNDGTLPHFPLPLGDLSVPHTGKLLTETLMDEQQGERFEAACVAAGARFSGGVFACAALAERELTNCETFDVVTTTDTRRTPTELRTTGWFTGLVPITVPVASGLFDSAARVAQISFDSGKDLATVPFDRVLELARPETGLRPPRPGNFVMSFLDASIAPLSTVANSDLNFRIYDEGRVSHQVSMWVNRYQHQTTVTVLFPDNPIASESVANYIAAMKSIYIRTADGTLAILKPGT.

The protein belongs to the PapA acyltransferase family.

The enzyme catalyses 2-O-sulfo-alpha,alpha-trehalose + hexadecanoyl-CoA = 2-O-sulfo-2'-O-hexadecanoyl-alpha,alpha-trehalose + CoA. In terms of biological role, required for the biosynthesis of sulfolipid-1 (SL-1), a major mycobacterial cell wall lipid. Catalyzes the acylation of trehalose-2-sulfate by adding the palmitoyl group at the 2'-position to yield the intermediate trehalose-2-sulfate-2'-palmitate (SL659). The sequence is that of Trehalose-2-sulfate acyltransferase PapA2 (papA2) from Mycobacterium bovis (strain ATCC BAA-935 / AF2122/97).